Consider the following 496-residue polypeptide: Alanine aminotransferase 1 (496 aa).

Ala-2 is modified (N-acetylalanine). Residue Thr-22 is modified to Phosphothreonine. Residue Lys-314 is modified to N6-(pyridoxal phosphate)lysine.

The protein belongs to the class-I pyridoxal-phosphate-dependent aminotransferase family. Alanine aminotransferase subfamily. In terms of assembly, homodimer. Pyridoxal 5'-phosphate is required as a cofactor. Liver, heart, skeletal muscle, etc.

The protein localises to the cytoplasm. It catalyses the reaction L-alanine + 2-oxoglutarate = pyruvate + L-glutamate. The protein operates within amino-acid degradation; L-alanine degradation via transaminase pathway; pyruvate from L-alanine: step 1/1. In terms of biological role, catalyzes the reversible transamination between alanine and 2-oxoglutarate to form pyruvate and glutamate. Participates in cellular nitrogen metabolism and also in liver gluconeogenesis starting with precursors transported from skeletal muscles. This is Alanine aminotransferase 1 (Gpt) from Rattus norvegicus (Rat).